A 168-amino-acid polypeptide reads, in one-letter code: Putative B3 domain-containing protein Os10g0158600 (168 aa).

The segment at residues 4–97 (VVFASARLNA…KARVMLLNRQ (94 aa)) is a DNA-binding region (TF-B3). A disordered region spans residues 105 to 151 (KTPSTTSSDKNRSLSPSDQLTRASTSAHPSTSKSIPPLRNGTGSTKR). A compositionally biased stretch (polar residues) spans 106-138 (TPSTTSSDKNRSLSPSDQLTRASTSAHPSTSKS).

The protein resides in the nucleus. This Oryza sativa subsp. japonica (Rice) protein is Putative B3 domain-containing protein Os10g0158600.